The following is a 115-amino-acid chain: DNA-binding protein STK_13740 (115 aa).

It belongs to the PDCD5 family.

The protein is DNA-binding protein STK_13740 of Sulfurisphaera tokodaii (strain DSM 16993 / JCM 10545 / NBRC 100140 / 7) (Sulfolobus tokodaii).